Reading from the N-terminus, the 225-residue chain is UPF0758 protein MADE_1000235 (225 aa).

In terms of domain architecture, MPN spans 102-224 (VFNNVDDTKR…TISFAQRGLL (123 aa)). Zn(2+) contacts are provided by His-173, His-175, and Asp-186. The short motif at 173-186 (HNHPSGVAEPSHAD) is the JAMM motif element.

The protein belongs to the UPF0758 family.

The chain is UPF0758 protein MADE_1000235 from Alteromonas mediterranea (strain DSM 17117 / CIP 110805 / LMG 28347 / Deep ecotype).